The sequence spans 101 residues: Small ribosomal subunit protein uS14 (101 aa).

This sequence belongs to the universal ribosomal protein uS14 family. Part of the 30S ribosomal subunit. Contacts proteins S3 and S10.

Its function is as follows. Binds 16S rRNA, required for the assembly of 30S particles and may also be responsible for determining the conformation of the 16S rRNA at the A site. The polypeptide is Small ribosomal subunit protein uS14 (Kocuria rhizophila (strain ATCC 9341 / DSM 348 / NBRC 103217 / DC2201)).